The chain runs to 1562 residues: Pikromycin polyketide synthase component PikAIII (1562 aa).

A Ketosynthase family 3 (KS3) domain is found at 34-464; sequence HEPVAIVGMA…GTNAHVVLEE (431 aa). A module 5 region spans residues 37–1475; the sequence is VAIVGMACRL…TPAALAAHLH (1439 aa). Cysteine 209 serves as the catalytic Acyl-thioester intermediate; for beta-ketoacyl synthase activity. Active-site for beta-ketoacyl synthase activity residues include histidine 344 and histidine 384. The segment at 565–866 is acyltransferase; it reads FVFPGQGTQW…GGQERLVTSL (302 aa). The active-site Acyl-ester intermediate; for acyltransferase activity is the serine 655. The segment at 1116 to 1293 is beta-ketoacyl reductase; the sequence is GTVLITGGTG…ATSVAWGLWA (178 aa). Residues 1124 to 1127, 1147 to 1150, 1176 to 1177, lysine 1226, and 1248 to 1249 contribute to the NADP(+) site; these read TGAL, SRSG, DV, and YS. The active-site Acyl-ester intermediate; for beta-ketoacyl reductase activity is the tyrosine 1263. A Carrier domain is found at 1403-1478; it reads PALLTLVRTH…ALAAHLHEAY (76 aa). Serine 1438 bears the O-(pantetheine 4'-phosphoryl)serine mark. Residues 1519–1548 form a disordered region; it reads GIEPEPGSGGSDGGAADPGAEPEASIDDLD. The segment covering 1532–1541 has biased composition (low complexity); it reads GAADPGAEPE.

As to quaternary structure, homodimer. Pikromycin PKS consists of a combination of multimodular (PikAI and PikAII) and monomodular (PikAIII and PikAIV) polypeptides each coding for a functional synthase subunit which participates in 1 (monomodular) or 2 (multimodular) of the six FAS-like elongation steps required for formation of the polyketide. Module 1, 2, 3, 4, 5, and 6 participating in biosynthesis steps 1, 2, 3, 4, 5, and 6, respectively. Pantetheine 4'-phosphate serves as cofactor.

It catalyses the reaction 5 (S)-methylmalonyl-CoA + malonyl-CoA + 5 NADPH + 11 H(+) = 10-deoxymethynolide + 6 CO2 + 5 NADP(+) + 6 CoA + 2 H2O. The catalysed reaction is 6 (S)-methylmalonyl-CoA + malonyl-CoA + 5 NADPH + 12 H(+) = narbonolide + 7 CO2 + 5 NADP(+) + 7 CoA + 2 H2O. It participates in antibiotic biosynthesis. Functionally, involved in the biosynthesis of 12- and 14-membered ring macrolactone antibiotics such as methymycin and neomethymycin, and pikromycin and narbomycin, respectively. Component of the pikromycin PKS which catalyzes the biosynthesis of both precursors 10-deoxymethynolide (12-membered ring macrolactone) and narbonolide (14-membered ring macrolactone). Chain elongation through PikAI, PikAII and PikAIII followed by thioesterase catalyzed termination results in the production of 10-deoxymethynolide, while continued elongation through PikAIV, followed by thioesterase (TE) catalyzed cyclization results in the biosynthesis of the narbonolide. In Streptomyces venezuelae, this protein is Pikromycin polyketide synthase component PikAIII.